The primary structure comprises 1113 residues: Nucleoporin NUP116/NSP116 (1113 aa).

The segment at methionine 1–alanine 35 is disordered. 4 FG repeats span residues phenylalanine 2–glycine 3, phenylalanine 17–glycine 18, phenylalanine 24–glycine 25, and phenylalanine 40–glycine 41. Residues threonine 13–proline 33 show a composition bias toward low complexity. Residues threonine 49–glycine 91 are disordered. One copy of the GLFG 1; approximate repeat lies at glycine 55–glycine 58. FG repeat units follow at residues phenylalanine 66 to glycine 67, phenylalanine 79 to glycine 80, and phenylalanine 94 to glycine 95. Residues serine 92 to asparagine 172 form an interaction with AFG2 region. A GLE2 binding sequence (GLEBS) region spans residues valine 110–lysine 166. Residues aspartate 160 to glycine 362 are interaction with MEX67, not KAP95. 2 FG repeats span residues phenylalanine 167–glycine 168 and phenylalanine 189–glycine 190. A GLFG 2 repeat occupies glycine 205 to glycine 208. The stretch at glycine 214 to glycine 217 is one GLFG 3; approximate repeat. The stretch at glycine 224–glycine 227 is one GLFG 4; approximate repeat. The GLFG 5 repeat unit spans residues glycine 235–glycine 238. The stretch at phenylalanine 249–glycine 250 is one FG 10 repeat. GLFG repeat units follow at residues glycine 259–glycine 262, glycine 276–glycine 279, and glycine 288–glycine 291. Low complexity predominate over residues threonine 265 to glycine 279. Positions threonine 265–phenylalanine 341 are disordered. A compositionally biased stretch (polar residues) spans glutamine 280 to asparagine 304. One copy of the FG 11 repeat lies at phenylalanine 297–glycine 298. A GLFG 9; approximate repeat occupies glycine 306–glycine 309. A GLFG 10; approximate repeat occupies glycine 327 to glycine 330. Residues glycine 330–phenylalanine 341 show a composition bias toward low complexity. One copy of the GLFG 11; approximate repeat lies at glycine 339–glycine 342. The FG 12 repeat unit spans residues phenylalanine 351 to glycine 352. Residues glycine 359–glycine 362 form a GLFG 12 repeat. The tract at residues glycine 362–threonine 535 is sufficient for interaction with MEX67 and KAP95. An FG 13 repeat occupies phenylalanine 370–glycine 371. A disordered region spans residues glycine 371–phenylalanine 606. GLFG repeat units lie at residues glycine 382–glycine 385, glycine 395–glycine 398, glycine 407–glycine 410, and glycine 420–glycine 423. Residues glycine 410–glycine 438 show a composition bias toward low complexity. Residues phenylalanine 431 to glycine 432 form an FG 14 repeat. 2 GLFG repeats span residues glycine 439–glycine 442 and glycine 448–glycine 451. Residues glycine 451–alanine 464 show a composition bias toward polar residues. 2 stretches are compositionally biased toward low complexity: residues glutamine 465–glutamine 478 and glycine 485–asparagine 522. One copy of the FG 15 repeat lies at phenylalanine 470–glycine 471. 2 GLFG repeats span residues glycine 482–glycine 485 and glycine 497–glycine 500. 3 FG repeats span residues phenylalanine 510–glycine 511, phenylalanine 525–glycine 526, and phenylalanine 532–glycine 533. Positions phenylalanine 532–alanine 569 are enriched in polar residues. The interaction with KAP95, not MEX67 stretch occupies residues serine 536–glutamine 732. 3 GLFG repeats span residues glycine 572–glycine 575, glycine 585–glycine 588, and glycine 604–glycine 607. Polar residues predominate over residues glycine 588–glycine 603. The stretch at phenylalanine 616 to glycine 617 is one FG 19 repeat. Residues glycine 630–glycine 633 form a GLFG 24; approximate repeat. GLFG repeat units follow at residues glycine 648–glycine 651, glycine 665–glycine 668, and glycine 683–glycine 686. Residues serine 678–serine 691 show a composition bias toward low complexity. Disordered stretches follow at residues serine 678 to arginine 736 and serine 868 to alanine 939. Positions glutamine 692–threonine 708 are enriched in polar residues. Over residues glutamine 719 to arginine 736 the composition is skewed to low complexity. Serine 886 carries the phosphoserine modification. The span at asparagine 916 to alanine 939 shows a compositional bias: basic and acidic residues. The Peptidase S59 domain maps to asparagine 967–alanine 1109. Positions asparagine 967–threonine 1113 are interaction with NUP82 NPC subcomplex. Residues asparagine 969–histidine 1108 form a nucleoporin RNA-binding motif (NRM) region.

This sequence belongs to the nucleoporin GLFG family. Component of the nuclear pore complex (NPC). NPC constitutes the exclusive means of nucleocytoplasmic transport. NPCs allow the passive diffusion of ions and small molecules and the active, nuclear transport receptor-mediated bidirectional transport of macromolecules such as proteins, RNAs, ribonucleoparticles (RNPs), and ribosomal subunits across the nuclear envelope. Due to its 8-fold rotational symmetry, all subunits are present with 8 copies or multiples thereof. NUP116 interacts with the NUP82 subcomplex and GLE2. Through its FG repeats it interacts with numerous karyopherins including KAP95, PSE1 (GSP1-GDP dependent), MEX67, and to homomeric RNA. Interacts with CEX1. Interacts (via N-terminus) with AFG2 (via N-terminus).

The protein resides in the nucleus. It is found in the nuclear pore complex. The protein localises to the nucleus membrane. Its function is as follows. Functions as a component of the nuclear pore complex (NPC). NPC components, collectively referred to as nucleoporins (NUPs), can play the role of both NPC structural components and of docking or interaction partners for transiently associated nuclear transport factors. Active directional transport is assured by both, a Phe-Gly (FG) repeat affinity gradient for these transport factors across the NPC and a transport cofactor concentration gradient across the nuclear envelope (GSP1 and GSP2 GTPases associated predominantly with GTP in the nucleus, with GDP in the cytoplasm). Plays an important role in several nuclear export and import pathways including poly(A)+ RNA, tRNA, pre-ribosome, and protein transport. By binding ATPase AFG2, promotes AFG2-mediated release of shuttling protein RLP24 from pre-60S ribosomal particles. This Saccharomyces cerevisiae (strain ATCC 204508 / S288c) (Baker's yeast) protein is Nucleoporin NUP116/NSP116 (NUP116).